The primary structure comprises 265 residues: Bradykinin-potentiating and C-type natriuretic peptides (265 aa).

The signal sequence occupies residues 1-23 (MVLSRLAASGLLLLALLALSVDG). A propeptide spanning residues 24–30 (KPVQQWA) is cleaved from the precursor. Q31 carries the post-translational modification Pyrrolidone carboxylic acid. Residues 44–50 (LKVQQWA) constitute a propeptide that is removed on maturation. Q51 is subject to Pyrrolidone carboxylic acid. Positions 64-70 (LTVQQWA) are excised as a propeptide. Q71 carries the pyrrolidone carboxylic acid modification. Positions 81 to 87 (LTVQQWA) are excised as a propeptide. Q88 is subject to Pyrrolidone carboxylic acid. The propeptide occupies 100-106 (LEVQQWA). Q107 carries the post-translational modification Pyrrolidone carboxylic acid. Positions 118–120 (APL) are excised as a propeptide. Pyrrolidone carboxylic acid is present on Q121. Residue V126 is a propeptide. Q127 carries the post-translational modification Pyrrolidone carboxylic acid. Positions 132-241 (LLQPHESPAS…GGARRLKGLA (110 aa)) are excised as a propeptide. The disordered stretch occupies residues 153-211 (GPEAASGVPSAGAEVGRSGSKAPAAPHRLSKSKGAAATSAASRPMRDLRPDGKQARQNW). The segment covering 184–194 (SKGAAATSAAS) has biased composition (low complexity). The segment covering 196-206 (PMRDLRPDGKQ) has biased composition (basic and acidic residues). A disulfide bridge links C249 with C265.

It in the N-terminal section; belongs to the bradykinin-potentiating peptide family. The protein in the C-terminal section; belongs to the natriuretic peptide family. Expressed by the venom gland.

The protein localises to the secreted. It localises to the cytoplasm. The protein resides in the cytosol. In terms of biological role, modestly inhibits ACE (with highest affinity for the N-site) and reveals strong bradykinin-potentiating activity. Induces nitric oxide (NO) production depended on muscarinic acetylcholine receptor M1 subtype (CHRM1) and bradykinin B2 receptor (BDKRB2) activation. Both these receptors contribute to the vasodilation induced by this peptide that may have an indirect action on BDKRB2 and a direct agonistic action on CHRM1. Its function is as follows. Peptide with several activities. It inhibits the activity of the angiotensin-converting enzyme (ACE) by a preferential interaction with its C-domain. It evokes transient hypotension (-14 mmHg) similar to that evoked by 0.5 ug of bradykinin, when injected alone into rats. It has a high bradykinin-potentiating effect (120%), when 60 nmol of BPP-10c are coinjected with 0.5 ug of bradykinin into rats. Does not affect angiotensin-1 pressor effects. Shows potent and long-lasting antihypertensive activity as well as a reduction of the heart rate. It also binds and dose-dependently promotes the activation of cytosolic argininosuccinate synthase (ASS1), an enzyme that catalyzes the conversion of citrulline, L-aspartate and ATP to argininosuccinate, AMP and pyrophosphate. It also enhances ASS1-dependent arginine production in HEK 293 cells, as well as in spontaneous hypertensive rat (SHR) and Wistar rat plasma. In addition, it induces the production of nitric-oxide (NO) by HUVEC cells via the endothelial nitric-oxide synthase (NOS3), which use arginine as a substrate and produce NO. It has been shown to be internalized by ASS1-expressing endothelial (HUVEC) and kidney (HEK 293) cells, and is detected homogenously distributed within the cell cytoplasm for up to 2 hours. Functionally, has a vasorelaxant activity in rat aortic strips and a diuretic potency in anesthetized rats. May act by activating natriuretic receptors (NPR1 and/or NPR2). The chain is Bradykinin-potentiating and C-type natriuretic peptides from Bothrops insularis (Golden lancehead).